A 306-amino-acid chain; its full sequence is Lymphotoxin-beta (306 aa).

Residues 1-27 (MGTRGLQGLGGRPQGRGCLLLAVAGAT) are Cytoplasmic-facing. A helical; Signal-anchor for type II membrane protein transmembrane segment spans residues 28-48 (SLVTLLLAVPITVLAVLALVP). The Extracellular segment spans residues 49-306 (QDQGRRVEKI…KTFFGAVMVG (258 aa)). Disordered regions lie at residues 63–112 (AQAQ…GPVA) and 127–151 (PAAD…DLNP). Over residues 74–85 (PSCILPSPSSLS) the composition is skewed to low complexity. The span at 95–112 (QRSNASRNLASTSQGPVA) shows a compositional bias: polar residues. Asparagine 98 carries N-linked (GlcNAc...) asparagine glycosylation. One can recognise a THD domain in the interval 154 to 305 (PAAHLIGAWM…GKTFFGAVMV (152 aa)). Asparagine 284 is a glycosylation site (N-linked (GlcNAc...) asparagine).

This sequence belongs to the tumor necrosis factor family. In terms of assembly, heterotrimer of either two LTB and one LTA subunits or (less prevalent) two LTA and one LTB subunits.

It localises to the membrane. Cytokine that binds to LTBR/TNFRSF3. May play a specific role in immune response regulation. Provides the membrane anchor for the attachment of the heterotrimeric complex to the cell surface. The chain is Lymphotoxin-beta (Ltb) from Mus musculus (Mouse).